We begin with the raw amino-acid sequence, 64 residues long: Large ribosomal subunit protein bL33c (64 aa).

The protein belongs to the bacterial ribosomal protein bL33 family.

The protein resides in the plastid. It localises to the chloroplast. The sequence is that of Large ribosomal subunit protein bL33c (rpl33) from Cyanidium caldarium (Red alga).